Consider the following 2637-residue polypeptide: Nonribisomal peptide synthetase valB (2637 aa).

A condensation 1 region spans residues 1 to 376 (MADGADYTQR…KALIRSPPST (376 aa)). Positions 413-803 (SQASRRPDAA…VGRRDNQIKL (391 aa)) are adenylation 1. The Carrier 1 domain maps to 946 to 1022 (PPANPPERAL…EAASEIKEPT (77 aa)). S983 carries the post-translational modification O-(pantetheine 4'-phosphoryl)serine. A disordered region spans residues 1016–1045 (SEIKEPTDASAPSPSPISRDLPLQKSNHDR). Positions 1063 to 1506 (VEAIYPCTAL…LSRADMSLLQ (444 aa)) are condensation 2. The interval 1524 to 1933 (AREVAHQRPL…EGRKDTRVKL (410 aa)) is adenylation 2. The 77-residue stretch at 2078-2154 (KEVTDDQAFM…YMVSKTSVSN (77 aa)) folds into the Carrier 2 domain. S2115 is modified (O-(pantetheine 4'-phosphoryl)serine). The segment at 2193-2582 (ESVAPATDAQ…LWMGAYLDAA (390 aa)) is condensation 3.

Belongs to the NRP synthetase family.

It participates in secondary metabolite biosynthesis. Nonribisomal peptide synthetase; part of the gene cluster that mediates the biosynthesis of valactamides. The first step of the pathway is performed by the highly reducing polyketide synthase valA that produces the polyketide part of the final products. An acetyl starter unit is incorporated by the ketosynthase domain of valA, and subsequently 6 malonyl-CoA-derived ketide units are incorporated and fully reduced to their respective alkane forms by the action of the ketoreductase, dehydratase, and enoylreductase domains (except for the penultimate unit, which is reduced only to the alkene). The final five ketide units are each proposed to be alpha-methylated by the methyltransferase domain before ketone reduction by the ketoreductase domain. The C1 domain of the nonribisomal peptide synthetase valB then catalyzes amide bond formation between the heptaketide chain and L-valine (L-Val) attached to the T1 domain. The C2 domain incorporating L-isoleucine (L-Ile) then carries out chain elongation, which is followed by macrolactonization by the Ct domain to release the final product. This chain is Nonribisomal peptide synthetase valB, found in Aspergillus terreus.